The following is a 388-amino-acid chain: Succinate--CoA ligase [ADP-forming] subunit beta (388 aa).

Positions 9-244 (KSLFAEYGLP…PSQDDAREAH (236 aa)) constitute an ATP-grasp domain. ATP contacts are provided by residues Lys46, 53–55 (GRG), Glu99, Thr102, and Glu107. The Mg(2+) site is built by Asn199 and Asp213. Substrate contacts are provided by residues Asn264 and 321-323 (GIV).

This sequence belongs to the succinate/malate CoA ligase beta subunit family. As to quaternary structure, heterotetramer of two alpha and two beta subunits. Requires Mg(2+) as cofactor.

The enzyme catalyses succinate + ATP + CoA = succinyl-CoA + ADP + phosphate. The catalysed reaction is GTP + succinate + CoA = succinyl-CoA + GDP + phosphate. Its pathway is carbohydrate metabolism; tricarboxylic acid cycle; succinate from succinyl-CoA (ligase route): step 1/1. Functionally, succinyl-CoA synthetase functions in the citric acid cycle (TCA), coupling the hydrolysis of succinyl-CoA to the synthesis of either ATP or GTP and thus represents the only step of substrate-level phosphorylation in the TCA. The beta subunit provides nucleotide specificity of the enzyme and binds the substrate succinate, while the binding sites for coenzyme A and phosphate are found in the alpha subunit. The polypeptide is Succinate--CoA ligase [ADP-forming] subunit beta (Shewanella baltica (strain OS195)).